The following is a 326-amino-acid chain: MTGTVSRRKKIAMIGSGMIGGTMGYLCVLRELADVVLFDVVTGMPEGKALDDSQATSIADTNVSVTSANQYEKIAGSDVVIITAGLTKVPGKSDKEWSRNDLLPFNAKIIREVAQGVKKYCPLAFVIVVTNPLDCMVKCFHEASGLPKNMVCGMANVLDSARFRRFIADQLEISPRDIQATVIGTHGDHMLPLARYVTVSGFPLREFIKKGKMTEAKLAEIVERTKKAGGEIVRLLGQGSAYYAPALSAITMAQAFLKDEKRVLPCSVYCQGEYGLHDMFIGLPAVIGGGGIEQVIELELTHEEQECFRKSVDDVVELNKSLAALG.

39–60 serves as a coordination point for NAD(+); that stretch reads DVVTGMPEGKALDDSQATSIAD. Substrate is bound by residues Arg-99, Asn-131, and Arg-162. Asn-131 is an NAD(+) binding site. His-186 functions as the Proton acceptor in the catalytic mechanism.

Belongs to the LDH/MDH superfamily. LDH family. Homotetramer.

It carries out the reaction (S)-lactate + NAD(+) = pyruvate + NADH + H(+). The protein operates within fermentation; pyruvate fermentation to lactate; (S)-lactate from pyruvate: step 1/1. The chain is L-lactate dehydrogenase from Toxoplasma gondii.